The primary structure comprises 136 residues: Magnetite biomineralization protein Mms6 (136 aa).

At 1 to 85 (MGEMEREGAT…AVGGTIWSGK (85 aa)) the chain is on the cytoplasmic side. The interval 86-95 (GLALGLGMGL) is GL repeat. A helical membrane pass occupies residues 86–106 (GLALGLGMGLGAWGPLILGVV). Over 107–136 (GAGAVYAYMKSRDIEAAQSDEEVELRDALS) the chain is Lumenal. The MIC, self-assembles, binds magnetite, Fe(2+) and Fe(3+) stretch occupies residues 115–136 (MKSRDIEAAQSDEEVELRDALS).

The protein belongs to the magnetosome Mms6 family. Full length protein oligomerizes and interacts with MamA. In terms of processing, may undergo cleavage.

The protein resides in the magnetosome membrane. In terms of biological role, promotes the formation of magnetite in Fe(2+)-rich conditions, when magnetite is not readily formed. Binds both Fe(2+) and Fe(3+). May help control the production of crystals with a specific morphology. May function with MamX, MamY amd MamZ in biomineralization. The 4 genes of this operon collectively influence magnetosome size and number. The chain is Magnetite biomineralization protein Mms6 from Magnetospirillum gryphiswaldense (strain DSM 6361 / JCM 21280 / NBRC 15271 / MSR-1).